Reading from the N-terminus, the 96-residue chain is Co-chaperonin GroES (96 aa).

The protein belongs to the GroES chaperonin family. As to quaternary structure, heptamer of 7 subunits arranged in a ring. Interacts with the chaperonin GroEL.

The protein resides in the cytoplasm. Together with the chaperonin GroEL, plays an essential role in assisting protein folding. The GroEL-GroES system forms a nano-cage that allows encapsulation of the non-native substrate proteins and provides a physical environment optimized to promote and accelerate protein folding. GroES binds to the apical surface of the GroEL ring, thereby capping the opening of the GroEL channel. This chain is Co-chaperonin GroES, found in Methylobacillus flagellatus (strain ATCC 51484 / DSM 6875 / VKM B-1610 / KT).